Here is a 141-residue protein sequence, read N- to C-terminus: Hemoglobin subunit alpha-2 (141 aa).

The Globin domain occupies 1–141; sequence VLSSQDKANV…VKHVLTSKYR (141 aa). H58 lines the O2 pocket. Heme b is bound at residue H87.

The protein belongs to the globin family. In terms of assembly, minor hemoglobin is a heterotetramer of two alpha-2 chains and two beta-2 chains. Red blood cells.

Involved in oxygen transport from the lung to the various peripheral tissues. The protein is Hemoglobin subunit alpha-2 of Triturus cristatus (Great crested newt).